A 485-amino-acid polypeptide reads, in one-letter code: MATLEDSFLADLDELSDNEAELDENDGDVGKEEEDVDMDMADLETLNYDDLDNVSKLQKSQRYADIMHKVEEALGKDSDGAEKGTVLEDDPEYKLIVDCNQLSVDIENEIVIVHNFIKDKYKLKFQELESLVHHPIDYACVVKKIGNETDLALVDLADLLPSAIIMVVSVTALTTKGSALPEDVLQKVLEACDRALDLDSARKKVLEFVESKMGSIAPNLSAIVGSAVAAKLMGTAGGLSALAKMPACNVQVLGHKRKNLAGFSSATSQSRVGYLEQTEIYQSTPPGLQARAGRLVAAKSTLAARVDATRGDPLGISGKAFREEIRKKIEKWQEPPPARQPKPLPVPDSEPKKRRGGRRLRKMKERYQVTDMRKLANRMAFGTPEESSLGDGLGEGYGMLGQAGSNRLRVSSVPSKLKINAKVAKKLKERQYAGGATTSGLTSSLAFTPVQGIELCNPQQALGLGSGTQSTYFSESGTFSKLKKI.

2 disordered regions span residues 1 to 36 (MATLEDSFLADLDELSDNEAELDENDGDVGKEEEDV) and 329 to 361 (IEKWQEPPPARQPKPLPVPDSEPKKRRGGRRLR). Over residues 11-36 (DLDELSDNEAELDENDGDVGKEEEDV) the composition is skewed to acidic residues. A Nop domain is found at 216-334 (IAPNLSAIVG…IRKKIEKWQE (119 aa)). A compositionally biased stretch (pro residues) spans 334-348 (EPPPARQPKPLPVPD). The span at 352 to 361 (KKRRGGRRLR) shows a compositional bias: basic residues. The Nuclear localization signal motif lies at 352–365 (KKRRGGRRLRKMKE).

Belongs to the PRP31 family. In terms of assembly, component of the U4/U6-U5 tri-snRNP complex composed of the U4, U6 and U5 snRNAs and pre-mRNA-splicing factors. Interacts with STA1 and SOP1.

The protein resides in the nucleus. Its subcellular location is the cajal body. Functionally, involved in pre-mRNA splicing. Required for the assembly of the U4/U5/U6 tri-snRNP complex, one of the building blocks of the spliceosome. Functions in association with STA1 and ZOP1 in spliceosome dynamics and pre-mRNA splicing. Required for transcriptional regulation and pre-mRNA splicing of cold-responsive genes, such as LTI78/RD29A, KIN2/COR6.6 or COR15A, especially under cold stress. May play a role in stress response. Involved in transcriptional gene silencing of endogenous transposable elements, independently of the RNA-directed DNA methylation (RdDM) pathway. Seems not to participate in the small RNA biogenesis of the RdDM pathway. This is U4/U6 small nuclear ribonucleoprotein Prp31 homolog from Arabidopsis thaliana (Mouse-ear cress).